A 569-amino-acid polypeptide reads, in one-letter code: Proline--tRNA ligase (569 aa).

This sequence belongs to the class-II aminoacyl-tRNA synthetase family. ProS type 1 subfamily. In terms of assembly, homodimer.

The protein resides in the cytoplasm. The catalysed reaction is tRNA(Pro) + L-proline + ATP = L-prolyl-tRNA(Pro) + AMP + diphosphate. Functionally, catalyzes the attachment of proline to tRNA(Pro) in a two-step reaction: proline is first activated by ATP to form Pro-AMP and then transferred to the acceptor end of tRNA(Pro). As ProRS can inadvertently accommodate and process non-cognate amino acids such as alanine and cysteine, to avoid such errors it has two additional distinct editing activities against alanine. One activity is designated as 'pretransfer' editing and involves the tRNA(Pro)-independent hydrolysis of activated Ala-AMP. The other activity is designated 'posttransfer' editing and involves deacylation of mischarged Ala-tRNA(Pro). The misacylated Cys-tRNA(Pro) is not edited by ProRS. The protein is Proline--tRNA ligase of Nitratiruptor sp. (strain SB155-2).